The chain runs to 298 residues: Oxygen-dependent coproporphyrinogen-III oxidase (298 aa).

Ser92 is a substrate binding site. The a divalent metal cation site is built by His96 and His106. His106 acts as the Proton donor in catalysis. A substrate-binding site is contributed by 108-110 (NVR). The a divalent metal cation site is built by His145 and His175. The important for dimerization stretch occupies residues 239–274 (YVEFNLVYDRGTLFGLQSGGRSESILMSLPPRVRWE). Position 257–259 (257–259 (GGR)) interacts with substrate.

This sequence belongs to the aerobic coproporphyrinogen-III oxidase family. As to quaternary structure, homodimer. A divalent metal cation serves as cofactor.

It is found in the cytoplasm. The catalysed reaction is coproporphyrinogen III + O2 + 2 H(+) = protoporphyrinogen IX + 2 CO2 + 2 H2O. Its pathway is porphyrin-containing compound metabolism; protoporphyrin-IX biosynthesis; protoporphyrinogen-IX from coproporphyrinogen-III (O2 route): step 1/1. Involved in the heme biosynthesis. Catalyzes the aerobic oxidative decarboxylation of propionate groups of rings A and B of coproporphyrinogen-III to yield the vinyl groups in protoporphyrinogen-IX. The chain is Oxygen-dependent coproporphyrinogen-III oxidase from Stenotrophomonas maltophilia (strain R551-3).